A 225-amino-acid chain; its full sequence is MHTTQKDTTYTKIFVGGLPYHTTDSSLRKYFEVFGDIEEAVVITDRQTGKSRGYGFVTMADRAAAERACKDPNPIIDGRKANVNLAYLGAKPRIMQPGFAFGVQQIHPALIQRPFGIPAHYVYPQAYVQPGVVIPHVQPTAATSTSPYIDYTSAAYAQYSAAAAAAAYDQYPYAASPAATGYVTAAGYGYAVPQPLTAAAPGSAAAAAAAFGQYQPQQLQADRMQ.

The RRM domain occupies 11–88; sequence TKIFVGGLPY…RKANVNLAYL (78 aa).

The protein resides in the nucleus. It localises to the cytoplasm. Multifunctional RNA-binding protein involved in the regulation of pre-mRNA splicing, mRNA stability and mRNA translation important for cell fate decision and differentiation. Plays a major role in pre-mRNA alternative splicing regulation. Mediates preferentially muscle-specific exon inclusion in numerous mRNAs important for striated cardiac and skeletal muscle cell differentiation. Binds to intronic splicing enhancer (ISE) composed of stretches of GU-rich motifs localized in flanking intron of exon that will be included by alternative splicing. Involved in embryonic stem cell (ESC) transition to cardiac cell differentiation by promoting pre-mRNA alternative splicing events of several pluripotency and/or differentiation genes. Plays a role in the regulation of mRNA stability and mRNA translation to which it is bound. Involved in myogenic differentiation by regulating myog levels. Binds to a huge amount of mRNAs. Required for embryonic heart development, sarcomer and M-band formation in striated muscles. In Xenopus laevis (African clawed frog), this protein is RNA-binding protein 24-A (rbm24-a).